We begin with the raw amino-acid sequence, 226 residues long: Ribosomal RNA small subunit methyltransferase G (226 aa).

S-adenosyl-L-methionine contacts are provided by residues glycine 86, leucine 91, valine 137 to glutamate 138, and arginine 150.

It belongs to the methyltransferase superfamily. RNA methyltransferase RsmG family.

It localises to the cytoplasm. The enzyme catalyses guanosine(527) in 16S rRNA + S-adenosyl-L-methionine = N(7)-methylguanosine(527) in 16S rRNA + S-adenosyl-L-homocysteine. In terms of biological role, specifically methylates the N7 position of guanine in position 527 of 16S rRNA. This is Ribosomal RNA small subunit methyltransferase G from Polaromonas sp. (strain JS666 / ATCC BAA-500).